A 251-amino-acid chain; its full sequence is MHLSLTQQCLWPLQILLVSNLLLWENVAAVPTSDSGLGISELLTEDLFDDAVILSQHINGLAIETRRIFLSNNFSSDMFVKFTLQFNRHDEFVVNGLNSCHTSSLKTPKTEKEAKRISLPDFVKMILSILRAWDSPLYHMETELKSMTGAPFSILARVKEIEVKNKILLKRIIKIAKKVKHGIEENEEYPVWSELASLQSTNEESRFFALYKMSYCLFVDTDKVEHYLKHLKCRYFDGYMCQDPENQISLQ.

Positions 1-29 (MHLSLTQQCLWPLQILLVSNLLLWENVAA) are cleaved as a signal peptide. Residue Asn-73 is glycosylated (N-linked (GlcNAc...) asparagine). 2 disulfides stabilise this stretch: Cys-100/Cys-216 and Cys-233/Cys-241.

This sequence belongs to the somatotropin/prolactin family.

The protein localises to the secreted. The sequence is that of Prolactin-7B1 (Prl7b1) from Rattus norvegicus (Rat).